Consider the following 436-residue polypeptide: Serine/threonine-protein kinase STK11 (436 aa).

A Phosphoserine modification is found at Ser31. N6-acetyllysine occurs at positions 44 and 48. Residues 45–90 (LIGKYLMGDLLGEGSYGKVKEVLDSETLCRRAVKILKKKKLRRIPN) are sufficient for interaction with SIRT1. In terms of domain architecture, Protein kinase spans 49–309 (YLMGDLLGEG…IRQIRQHSWF (261 aa)). Residues 55 to 63 (LGEGSYGKV) and Lys78 each bind ATP. An N6-acetyllysine mark is found at Lys96 and Lys97. Residue Asp176 is the Proton acceptor of the active site. Position 189 is a phosphothreonine; by autocatalysis (Thr189). Lys296 and Lys311 each carry N6-acetyllysine. At Ser325 the chain carries Phosphoserine. At Thr336 the chain carries Phosphothreonine; by autocatalysis. Phosphothreonine; by ATM and autocatalysis is present on Thr366. Positions 398 to 421 (TEPQLSSKVKPEGRPGTANPARKV) are disordered. Ser403 is modified (phosphoserine). At Lys420 the chain carries N6-acetyllysine. Cys422 carries S-palmitoyl cysteine lipidation. An N6-acetyllysine modification is found at Lys426. Ser431 is subject to Phosphoserine; by autocatalysis, PKA, PKC/PRKCZ and RPS6KA1. Cys433 is subject to Cysteine methyl ester. Cys433 carries the S-farnesyl cysteine lipid modification. An N6-acetyllysine modification is found at Lys434. A propeptide spans 434 to 436 (KQQ) (removed in mature form).

It belongs to the protein kinase superfamily. CAMK Ser/Thr protein kinase family. LKB1 subfamily. Catalytic component of a trimeric complex composed of STK11/LKB1, STRAD (STRADA or STRADB) and CAB39/MO25 (CAB39/MO25alpha or CAB39L/MO25beta): the complex tethers STK11/LKB1 in the cytoplasm and stimulates its catalytic activity. Found in a ternary complex composed of SMAD4, STK11/LKB1 and STK11IP. Interacts with p53/TP53, SMAD4, STK11IP and WDR6. Interacts with NR4A1. Interacts with NISCH; this interaction may increase STK11 activity. Interacts with PTEN, leading to PTEN phosphorylation. Interacts with SIRT1; the interaction deacetylates STK11. Interacts with CDKN1A. Mg(2+) is required as a cofactor. The cofactor is Mn(2+). Post-translationally, phosphorylated by ATM at Thr-366 following ionizing radiation (IR). Phosphorylation at Ser-431 by RPS6KA1 and/or some PKA is required to inhibit cell growth. Phosphorylation at Ser-431 is also required during neuronal polarization to mediate phosphorylation of BRSK1 and BRSK2. Phosphorylation by PKC/PRKCZ at Ser-399 in isoform 2 promotes metformin (or peroxynitrite)-induced nuclear export of STK11 and activation of AMPK. UV radiation-induced phosphorylation at Thr-366 mediates CDKN1A degradation. In terms of processing, acetylated. Deacetylation at Lys-48 enhances cytoplasmic localization and kinase activity in vitro. In terms of tissue distribution, widely expressed. Predominantly expressed in testis (at protein level). As to expression, expressed in adult brain and liver and absent from tissues derived from postnatal day 7.

It is found in the nucleus. The protein localises to the cytoplasm. The protein resides in the membrane. Its subcellular location is the mitochondrion. It carries out the reaction L-seryl-[protein] + ATP = O-phospho-L-seryl-[protein] + ADP + H(+). The catalysed reaction is L-threonyl-[protein] + ATP = O-phospho-L-threonyl-[protein] + ADP + H(+). Its activity is regulated as follows. Activated by forming a complex with STRAD (STRADA or STRADB) and CAB39/MO25 (CAB39/MO25alpha or CAB39L/MO25beta): STRADA (or STRADB)-binding promotes a conformational change of STK11/LKB1 in an active conformation, which is stabilized by CAB39/MO25alpha (or CAB39L/MO25beta) interacting with the STK11/LKB1 activation loop. Sequestration in the nucleus by NR4A1 prevents it from phosphorylating and activating cytoplasmic AMPK. Functionally, tumor suppressor serine/threonine-protein kinase that controls the activity of AMP-activated protein kinase (AMPK) family members, thereby playing a role in various processes such as cell metabolism, cell polarity, apoptosis and DNA damage response. Acts by phosphorylating the T-loop of AMPK family proteins, thus promoting their activity: phosphorylates PRKAA1, PRKAA2, BRSK1, BRSK2, MARK1, MARK2, MARK3, MARK4, NUAK1, NUAK2, SIK1, SIK2, SIK3 and SNRK but not MELK. Also phosphorylates non-AMPK family proteins such as STRADA, PTEN and possibly p53/TP53. Acts as a key upstream regulator of AMPK by mediating phosphorylation and activation of AMPK catalytic subunits PRKAA1 and PRKAA2 and thereby regulates processes including: inhibition of signaling pathways that promote cell growth and proliferation when energy levels are low, glucose homeostasis in liver, activation of autophagy when cells undergo nutrient deprivation, and B-cell differentiation in the germinal center in response to DNA damage. Also acts as a regulator of cellular polarity by remodeling the actin cytoskeleton. Required for cortical neuron polarization by mediating phosphorylation and activation of BRSK1 and BRSK2, leading to axon initiation and specification. Involved in DNA damage response: interacts with p53/TP53 and recruited to the CDKN1A/WAF1 promoter to participate in transcription activation. Able to phosphorylate p53/TP53; the relevance of such result in vivo is however unclear and phosphorylation may be indirect and mediated by downstream STK11/LKB1 kinase NUAK1. Also acts as a mediator of p53/TP53-dependent apoptosis via interaction with p53/TP53: translocates to the mitochondrion during apoptosis and regulates p53/TP53-dependent apoptosis pathways. Regulates UV radiation-induced DNA damage response mediated by CDKN1A. In association with NUAK1, phosphorylates CDKN1A in response to UV radiation and contributes to its degradation which is necessary for optimal DNA repair. Its function is as follows. Has a role in spermiogenesis. The sequence is that of Serine/threonine-protein kinase STK11 from Mus musculus (Mouse).